Reading from the N-terminus, the 545-residue chain is CTP synthase (545 aa).

Residues 1–266 form an amidoligase domain region; the sequence is MTTNYIFVTG…DDYICKRFSL (266 aa). Ser-14 provides a ligand contact to CTP. Ser-14 provides a ligand contact to UTP. ATP is bound by residues 15-20 and Asp-72; that span reads SLGKGI. The Mg(2+) site is built by Asp-72 and Glu-140. CTP is bound by residues 147-149, 187-192, and Lys-223; these read DIE and KTKPTQ. UTP-binding positions include 187 to 192 and Lys-223; that span reads KTKPTQ. Residue 239–241 participates in ATP binding; that stretch reads KDV. The Glutamine amidotransferase type-1 domain occupies 291–542; sequence TIGMVGKYIE…VKAASEHQKR (252 aa). Residue Gly-352 participates in L-glutamine binding. Catalysis depends on Cys-379, which acts as the Nucleophile; for glutamine hydrolysis. L-glutamine-binding positions include 380–383, Glu-403, and Arg-470; that span reads LGMQ. Catalysis depends on residues His-515 and Glu-517.

The protein belongs to the CTP synthase family. Homotetramer.

It carries out the reaction UTP + L-glutamine + ATP + H2O = CTP + L-glutamate + ADP + phosphate + 2 H(+). The enzyme catalyses L-glutamine + H2O = L-glutamate + NH4(+). The catalysed reaction is UTP + NH4(+) + ATP = CTP + ADP + phosphate + 2 H(+). The protein operates within pyrimidine metabolism; CTP biosynthesis via de novo pathway; CTP from UDP: step 2/2. Its activity is regulated as follows. Allosterically activated by GTP, when glutamine is the substrate; GTP has no effect on the reaction when ammonia is the substrate. The allosteric effector GTP functions by stabilizing the protein conformation that binds the tetrahedral intermediate(s) formed during glutamine hydrolysis. Inhibited by the product CTP, via allosteric rather than competitive inhibition. Functionally, catalyzes the ATP-dependent amination of UTP to CTP with either L-glutamine or ammonia as the source of nitrogen. Regulates intracellular CTP levels through interactions with the four ribonucleotide triphosphates. This chain is CTP synthase, found in Salmonella arizonae (strain ATCC BAA-731 / CDC346-86 / RSK2980).